We begin with the raw amino-acid sequence, 94 residues long: Co-chaperonin GroES (94 aa).

It belongs to the GroES chaperonin family. In terms of assembly, heptamer of 7 subunits arranged in a ring. Interacts with the chaperonin GroEL.

The protein localises to the cytoplasm. In terms of biological role, together with the chaperonin GroEL, plays an essential role in assisting protein folding. The GroEL-GroES system forms a nano-cage that allows encapsulation of the non-native substrate proteins and provides a physical environment optimized to promote and accelerate protein folding. GroES binds to the apical surface of the GroEL ring, thereby capping the opening of the GroEL channel. The protein is Co-chaperonin GroES of Streptococcus agalactiae.